We begin with the raw amino-acid sequence, 483 residues long: Nuc-1 negative regulatory protein preg (483 aa).

Low complexity-rich tracts occupy residues 1–32, 60–80, and 176–200; these read MLTRSPASAAATSPTTTVTVTVTAAATSPRPS, SSRRQSATAPATSSTSLPISI, and ASALASTSEATAAPIPHGPTVAVAV. Disordered stretches follow at residues 1–112, 164–234, and 434–483; these read MLTR…SRPQ, NTVG…SQGD, and CPEP…RHAT. Over residues 435-473 the composition is skewed to acidic residues; it reads PEPEEADDEDEDEELDESDAIGDDDDDIDGEGGEREEET.

Belongs to the cyclin family.

Its function is as follows. Negative regulator, together with pgov, of the transcriptional activator nuc-1, which controls the expression of phosphorous acquisition enzymes. The chain is Nuc-1 negative regulatory protein preg (preg) from Neurospora crassa (strain ATCC 24698 / 74-OR23-1A / CBS 708.71 / DSM 1257 / FGSC 987).